Here is a 372-residue protein sequence, read N- to C-terminus: Protein phosphatase Mn(2+)-dependent 1K (372 aa).

The N-terminal 29 residues, 1–29 (MLSTAFITLVRSGRNQVKKRVLLSSILLQ), are a transit peptide targeting the mitochondrion. The interval 46–61 (RCSRFDPDGSGQPATW) is critical for association with the BCKDH complex. The region spanning 94–346 (NVGCASLIGK…DNSTAVVVPF (253 aa)) is the PPM-type phosphatase domain. Mn(2+) contacts are provided by Asp-127 and Gly-128. Ser-248 bears the Phosphoserine mark. Residues Asp-298 and Asp-337 each coordinate Mn(2+).

This sequence belongs to the PP2C family. In terms of assembly, interacts with E1 and E2 components of the branched-chain alpha-ketoacid dehydrogenase (BCKDH) complex. Interacts with both BCKDHA and BCKDHB chains of the E1 subunit. Interacts with the 24-meric DBT/E2 core of the BCKD complex with a 1:1 stoichiometry; the N-terminal region (residues 49-61) of PPM1K and C-terminal linker of the lipoyl domain of DBT/E2 (residues 145-160) are critical for this interaction whereas the lipoyl prosthetic group is dispensable. Competes with BCKDK for binding to DBT/E2; this interaction is modulated by branched-chain alpha-keto acids (BCKAs). At steady state, BCKDH holoenzyme preferentially binds BCKDK and BCKDHA/E1 is phosphorylated. In response to high levels of BCKAs, BCKDK is replaced by PPM1K leading to BCKDHA/E1 dephosphorylation. Mn(2+) serves as cofactor.

The protein localises to the mitochondrion matrix. It carries out the reaction O-phospho-L-seryl-[3-methyl-2-oxobutanoate dehydrogenase] + H2O = L-seryl-[3-methyl-2-oxobutanoate dehydrogenase] + phosphate. The catalysed reaction is O-phospho-L-seryl-[protein] + H2O = L-seryl-[protein] + phosphate. Its pathway is protein modification. Serine/threonine-protein phosphatase component of macronutrients metabolism. Together with BCKDK serves as a metabolic regulatory node that coordinates branched-chain amino acids (BCAAs) and protein synthesis with glucose and lipid metabolism via two distinct phosphoprotein targets: BCKDHA/E1a subunit of the branched-chain alpha-ketoacid dehydrogenase (BCKDH) complex and ACLY, a lipogenic enzyme of Krebs cycle. At high levels of branched-chain ketoacids (BCKAs), dephosphorylates and activates mitochondrial BCKDH complex, a multisubunit complex consisting of three components, heterotetrameric E1 composed of BCKDHA and BCKDHB chains, 24-meric E2 core composed of DBT and homodimeric E3 composed of DLD, each involved in different steps of BCAA catabolism. Tightly associates with the E2 subunit of BCKDH complex and dephosphorylates Ser-333 of BCKDHA chain of the E1 subunit likely through on-off binding to individual E2 subunits of the 24-meric E2 core to increase the efficiency of the dephosphorylation reaction. Appears to dephosphorylate and inactivate cytosolic ACLY in response to changes of cellular carbohydrate abundance. Overnutrition and in particular high-fructose diet, activates MLXIPL/ChREBP leading to increased BCKDK to PPM1K ratio, phosphorylation of ACLY on Ser-454 and activation of its enzymatic activity that ultimately results in the generation of acetyl-CoA and malonyl-CoA immediate substrates of de novo lipogenesis. Recognizes phosphosites having SxS or RxxS motifs and strictly depends on Mn(2+) ions for the phosphatase activity. Regulates Ca(2+)-induced opening of mitochondrial transition pore and apoptotic cell death. In Rattus norvegicus (Rat), this protein is Protein phosphatase Mn(2+)-dependent 1K (Ppm1k).